A 541-amino-acid polypeptide reads, in one-letter code: NEDD8-activating enzyme E1 regulatory subunit (541 aa).

Belongs to the ubiquitin-activating E1 family. ULA1 subfamily. In terms of assembly, heterodimer of uba-3 and ula-1. The complex binds NEDD8 and ubc-12.

It participates in protein modification; protein neddylation. Its function is as follows. Regulatory subunit of the dimeric uba-3-ula-1 E1 enzyme. E1 activates NEDD8 by first adenylating its C-terminal glycine residue with ATP, thereafter linking this residue to the side chain of the catalytic cysteine, yielding a NEDD8-rfl-1 (uba-3) thioester and free AMP. E1 finally transfers NEDD8 to the catalytic cysteine of ubc-12. Required for rfl-1 (uba-3) nuclear localization during early embryonic development. This Caenorhabditis elegans protein is NEDD8-activating enzyme E1 regulatory subunit (ula-1).